We begin with the raw amino-acid sequence, 684 residues long: Frizzled-8 (684 aa).

The first 27 residues, 1-27, serve as a signal peptide directing secretion; it reads MEWGYLLEVTSLLAALAVLQRSSGAAA. At 28–271 the chain is on the extracellular side; sequence ASAKELACQE…NPFFSQDERA (244 aa). One can recognise an FZ domain in the interval 30–151; the sequence is AKELACQEIT…GNPDTLCMDY (122 aa). 5 disulfides stabilise this stretch: cysteine 35/cysteine 96, cysteine 43/cysteine 89, cysteine 80/cysteine 118, cysteine 107/cysteine 148, and cysteine 111/cysteine 135. Asparagine 49 carries N-linked (GlcNAc...) asparagine glycosylation. 71–78 lines the hexadecanoate pocket; the sequence is QFWPLVEI. Residues 95 to 100 are wnt-binding; the sequence is ICLEDY. Residues 147 to 152 are wnt-binding; that stretch reads LCMDYN. An N-linked (GlcNAc...) asparagine glycan is attached at asparagine 152. Residues 155-222 are disordered; the sequence is DLTTAAPSPP…KARPPGGGAA (68 aa). The segment covering 161 to 175 has biased composition (pro residues); it reads PSPPRRLPPPQPGEQ. Low complexity-rich tracts occupy residues 176–186 and 199–222; these read PPSGSGHSRPP and GSGD…GGAA. The chain crosses the membrane as a helical span at residues 272 to 292; that stretch reads FTVFWIGLWSVLCFVSTFATV. Residues 293–308 lie on the Cytoplasmic side of the membrane; sequence STFLIDMERFKYPERP. The chain crosses the membrane as a helical span at residues 309–329; sequence IIFLSACYLFVSVGYLVRLVA. Residues 330–393 lie on the Extracellular side of the membrane; sequence GHEKVACSGG…RYETTGPALC (64 aa). A helical membrane pass occupies residues 394 to 414; sequence TVVFLLVYFFGMASSIWWVIL. Over 415-436 the chain is Cytoplasmic; sequence SLTWFLAAGMKWGNEAIAGYSQ. Residues 437–457 form a helical membrane-spanning segment; the sequence is YFHLAAWLVPSVKSIAVLALS. Over 458–480 the chain is Extracellular; it reads SVDGDPVAGICYVGNQSLDNLRG. Asparagine 472 carries N-linked (GlcNAc...) asparagine glycosylation. Residues 481 to 501 form a helical membrane-spanning segment; it reads FVLAPLVIYLFIGTMFLLAGF. Over 502 to 529 the chain is Cytoplasmic; it reads VSLFRIRSVIKQQGGPTKTHKLEKLMIR. The chain crosses the membrane as a helical span at residues 530 to 550; the sequence is LGLFTVLYTVPAAVVVACLFY. The Extracellular portion of the chain corresponds to 551 to 581; it reads EQHNRPRWEATHNCPCLRDLQPDQARRPDYA. A helical membrane pass occupies residues 582–602; it reads VFMLKYFMCLVVGITSGVWVW. Residues 603–684 are Cytoplasmic-facing; the sequence is SGKTLESWRA…YPKQMPLSQV (82 aa). A Lys-Thr-X-X-X-Trp motif, mediates interaction with the PDZ domain of Dvl family members motif is present at residues 605–610; that stretch reads KTLESW. A compositionally biased stretch (gly residues) spans 630 to 654; the sequence is AGGSGPGGGGPGPGGGGGHGGGGGS. A disordered region spans residues 630–655; sequence AGGSGPGGGGPGPGGGGGHGGGGGSL. The short motif at 682–684 is the PDZ-binding element; sequence SQV.

The protein belongs to the G-protein coupled receptor Fz/Smo family. Component of a Wnt-signaling complex that contains a WNT protein, a FZD protein and LRP5 or LRP6. Interacts directly with LRP5 or LRP6; the interaction is promoted by Wnt-binding and signaling and inhibited by DKK1. Interacts (via the PDZ-binding motif) with GPOC (via its PDZ domain). Interacts with RSPO1 and RSPO3. Interacts with glypican GPC3. Ubiquitinated by ZNRF3, leading to its degradation by the proteasome.

Its subcellular location is the membrane. It is found in the golgi apparatus. It localises to the cell membrane. In terms of biological role, receptor for Wnt proteins. Component of the Wnt-Fzd-LRP5-LRP6 complex that triggers beta-catenin signaling through inducing aggregation of receptor-ligand complexes into ribosome-sized signalosomes. The beta-catenin canonical signaling pathway leads to the activation of disheveled proteins, inhibition of GSK-3 kinase, nuclear accumulation of beta-catenin and activation of Wnt target genes. A second signaling pathway involving PKC and calcium fluxes has been seen for some family members, but it is not yet clear if it represents a distinct pathway or if it can be integrated in the canonical pathway, as PKC seems to be required for Wnt-mediated inactivation of GSK-3 kinase. Both pathways seem to involve interactions with G-proteins. May be involved in transduction and intercellular transmission of polarity information during tissue morphogenesis and/or in differentiated tissues. Coreceptor along with RYK of Wnt proteins, such as WNT1. This Rattus norvegicus (Rat) protein is Frizzled-8 (Fzd8).